We begin with the raw amino-acid sequence, 383 residues long: Acetylornithine deacetylase (383 aa).

H80 lines the Zn(2+) pocket. D82 is an active-site residue. Residue D112 coordinates Zn(2+). E144 is an active-site residue. Zn(2+)-binding residues include E145, E169, and H355.

Belongs to the peptidase M20A family. ArgE subfamily. As to quaternary structure, homodimer. Zn(2+) serves as cofactor. The cofactor is Co(2+). Glutathione is required as a cofactor.

It is found in the cytoplasm. It catalyses the reaction N(2)-acetyl-L-ornithine + H2O = L-ornithine + acetate. It functions in the pathway amino-acid biosynthesis; L-arginine biosynthesis; L-ornithine from N(2)-acetyl-L-ornithine (linear): step 1/1. Functionally, catalyzes the hydrolysis of the amide bond of N(2)-acetylated L-amino acids. Cleaves the acetyl group from N-acetyl-L-ornithine to form L-ornithine, an intermediate in L-arginine biosynthesis pathway, and a branchpoint in the synthesis of polyamines. The sequence is that of Acetylornithine deacetylase from Salmonella heidelberg (strain SL476).